The sequence spans 1324 residues: Sal-like protein 1 (1324 aa).

The interval 1–42 (MSRRKQAKPQHFQSDPEVASLPRRDGDTEKGQPSRPTKSKDA) is disordered. Basic and acidic residues predominate over residues 22–42 (PRRDGDTEKGQPSRPTKSKDA). Residues 43–65 (HVCGRCCAEFFELSDLLLHKKNC) form a C2H2-type 1; atypical zinc finger. 4 disordered regions span residues 77–102 (NPASPPETFSPSPPPDNPDEQMNDTV), 108–127 (VDCSDLSEHNGLDREESMEV), 132–172 (ANKS…TSAI), and 317–336 (PPIQLPQSSSGNTIIPSNSG). Over residues 113–124 (LSEHNGLDREES) the composition is skewed to basic and acidic residues. The segment covering 135-158 (SGSGTSSGSHSSTAPSSSSSSSSS) has biased composition (low complexity). The span at 321–336 (LPQSSSGNTIIPSNSG) shows a compositional bias: polar residues. Residue K439 forms a Glycyl lysine isopeptide (Lys-Gly) (interchain with G-Cter in SUMO2) linkage. 2 C2H2-type zinc fingers span residues 449–471 (HKCRFCAKVFGSDSALQIHLRSH) and 477–499 (FKCNICGNRFSTKGNLKVHFQRH). A disordered region spans residues 577 to 646 (PIPISHSATS…ASSSVLSSPA (70 aa)). S590, S593, and S595 each carry phosphoserine. Residues 633-646 (SVPTASSSVLSSPA) are compositionally biased toward low complexity. Glycyl lysine isopeptide (Lys-Gly) (interchain with G-Cter in SUMO2) cross-links involve residues K673, K690, and K701. 3 consecutive C2H2-type zinc fingers follow at residues 706–728 (NECIICHRVLSCQSALKMHYRTH), 734–756 (FKCKICGRAFTTKGNLKTHYSVH), and 766–788 (HSCPICQKKFTNAVVLQQHIRMH). Disordered regions lie at residues 790–856 (GGQI…SSPL) and 894–963 (EGDV…LSPT). Positions 802-811 (YSESMESDTG) are enriched in polar residues. A compositionally biased stretch (acidic residues) spans 820 to 833 (DLDNFSDENMEDCP). Over residues 843–856 (SADASQDSLSSSPL) the composition is skewed to low complexity. Residues 899-936 (TNDSSSVGGDMESQSAGSPAISESTSSMQALSPSNSTQ) are compositionally biased toward polar residues. Positions 937-949 (EFHKSPSIEEKPQ) are enriched in basic and acidic residues. A phosphoserine mark is found at S941 and S943. Glycyl lysine isopeptide (Lys-Gly) (interchain with G-Cter in SUMO2) cross-links involve residues K947 and K982. 2 C2H2-type zinc fingers span residues 1001–1023 (TACDICGKTFACQSALDIHYRSH) and 1029–1051 (FICTVCNRGFSTKGNLKQHMLTH). A Glycyl lysine isopeptide (Lys-Gly) (interchain with G-Cter in SUMO2) cross-link involves residue K1086. A disordered region spans residues 1095 to 1120 (VSPQDSKDTPTSHVPSGPLSSSATSP). Residues 1105–1119 (TSHVPSGPLSSSATS) are compositionally biased toward polar residues. 2 C2H2-type zinc fingers span residues 1134 to 1156 (HYCNTCGKTFSSSSALQIHERTH) and 1162 to 1184 (FACTICGRAFTTKGNLKVHMGTH). Glycyl lysine isopeptide (Lys-Gly) (interchain with G-Cter in SUMO2) cross-links involve residues K1219, K1299, and K1319.

Belongs to the sal C2H2-type zinc-finger protein family. May associate with NuRD histone deacetylase complex (HDAC). Interacts with components of HDAC complex including HDAC1, HDAC2, RBBP4, RBPP7, MTA1 and MTA2. Interacts with CCNQ. Interacts with NSD2 (via PHD-type zinc fingers 1, 2 and 3). Highest levels in kidney. Lower levels in adult brain (enriched in corpus callosum, lower expression in substantia nigra) and liver.

The protein resides in the nucleus. Transcriptional repressor involved in organogenesis. Plays an essential role in ureteric bud invasion during kidney development. This chain is Sal-like protein 1 (SALL1), found in Homo sapiens (Human).